We begin with the raw amino-acid sequence, 417 residues long: Gamma-glutamyl phosphate reductase (417 aa).

It belongs to the gamma-glutamyl phosphate reductase family.

Its subcellular location is the cytoplasm. The enzyme catalyses L-glutamate 5-semialdehyde + phosphate + NADP(+) = L-glutamyl 5-phosphate + NADPH + H(+). Its pathway is amino-acid biosynthesis; L-proline biosynthesis; L-glutamate 5-semialdehyde from L-glutamate: step 2/2. Functionally, catalyzes the NADPH-dependent reduction of L-glutamate 5-phosphate into L-glutamate 5-semialdehyde and phosphate. The product spontaneously undergoes cyclization to form 1-pyrroline-5-carboxylate. The chain is Gamma-glutamyl phosphate reductase from Shigella flexneri serotype 5b (strain 8401).